A 240-amino-acid polypeptide reads, in one-letter code: Uridylate kinase (240 aa).

K12–G15 serves as a coordination point for ATP. Positions G20–G25 are involved in allosteric activation by GTP. G54 serves as a coordination point for UMP. ATP is bound by residues G55 and R59. Residues D74 and T135–T142 each bind UMP. ATP is bound by residues N163, Y169, and D172.

It belongs to the UMP kinase family. Homohexamer.

The protein localises to the cytoplasm. The catalysed reaction is UMP + ATP = UDP + ADP. Its pathway is pyrimidine metabolism; CTP biosynthesis via de novo pathway; UDP from UMP (UMPK route): step 1/1. Its activity is regulated as follows. Allosterically activated by GTP. Inhibited by UTP. In terms of biological role, catalyzes the reversible phosphorylation of UMP to UDP. The chain is Uridylate kinase from Geobacillus thermodenitrificans (strain NG80-2).